The sequence spans 119 residues: Cysteine-rich DPF motif domain-containing protein 1 (119 aa).

Belongs to the CDPF1 family.

The protein is Cysteine-rich DPF motif domain-containing protein 1 (Cdpf1) of Mus musculus (Mouse).